A 114-amino-acid chain; its full sequence is Protein ORF3 (114 aa).

Residues 1-28 are membrane association; that stretch reads MGSRPCALGLFCCCSSCFCLCCPRHRPV. 2 hydrophobic regions span residues 6-22 and 33-53; these read CALGLFCCCSSCFCLCC and AAVGGAAAVPAVVSGVTGLIL. Residues 6–22 are induction of host SIRPA expression; the sequence is CALGLFCCCSSCFCLCC. An interaction with host HPX region spans residues 28 to 68; the sequence is VSRLAAAVGGAAAVPAVVSGVTGLILSPSQSPIFIQPTPSP. The tract at residues 48–72 is interaction with the capsid protein; it reads VTGLILSPSQSPIFIQPTPSPPMSP. A Phosphoserine; by host modification is found at Ser71. Positions 72 to 114 are homodimerization, and interaction with host AMBP/bikunin; sequence PLRPGLDLVFANPPDHSAPLGVTRPSAPPLPHVVDLPQLGPRR. The tract at residues 91 to 114 is disordered; that stretch reads LGVTRPSAPPLPHVVDLPQLGPRR. The segment at 95-104 is interaction with host SRC, HCK, FYN, PIK3R3 and GRB2; it reads RPSAPPLPHV. A PTAP/PSAP motif motif is present at residues 96–99; sequence PSAP.

Belongs to the hepevirus ORF3 protein family. In terms of assembly, forms homooligomers. Interacts with host SRC, HCK, FYN, PIK3R3 and GRB2 (via SH3 domain); binding does not activate the kinases. Interacts with host AMBP/bikunin and AMBP/alpha-1-microglobulin peptides. Interacts with host HPX/hemopexin. Interacts (when phosphorylated) with capsid protein ORF2. Interacts with host TSG101; this interaction plays a role in viral release from the host cell. Interacts with host SIRPA; this interaction down-regulates the phosphorylation of host IRF3. In terms of processing, palmitoylated in the N-terminus.

It localises to the host endoplasmic reticulum membrane. It is found in the host cytoplasm. Its subcellular location is the host cytoskeleton. The protein localises to the virion. The protein resides in the host cell membrane. Small multifunctional phosphoprotein involved in virion morphogenesis, egress and counteracting host innate immunity. Plays critical roles in the final steps of viral release by interacting with host TSG101, a member of the vacuolar protein-sorting pathway and using other cellular host proteins involved in vesicle formation pathway. Also acts as a viroporin and forms ion conductive pores allowing viral particle release. Impairs the generation of type I interferon by down-regulating host TLR3 and TLR7 as well as their downstream signaling pathways. Down-regulates the phosphorylation of host IRF3 via the interaction with host SIRP-alpha, thereby inhibiting IFN-I expression. Interacts with host microtubules. This is Protein ORF3 from Hepatitis E virus genotype 1 (isolate Human/China/HeBei/1987) (HEV).